The following is a 698-amino-acid chain: Trafficking protein particle complex III-specific subunit 85 (698 aa).

2 disordered regions span residues 82 to 125 (VGQH…LFQR) and 678 to 698 (VDSAPRPSEKNLTRTSVSFIG). Over residues 678–689 (VDSAPRPSEKNL) the composition is skewed to basic and acidic residues.

The protein belongs to the TRS85 family. Part of the multisubunit TRAPP (transport protein particle) III complex composed of BET3, BET5, TRS20, TRS23, TRS31, TRS33 and TRS85.

The protein resides in the preautophagosomal structure. Its function is as follows. Specific subunit of the TRAPP III complex that acts as an autophagy-specific guanine nucleotide exchange factor (GEF) for YPT1. TRS85 directs the TRAPP III complex to the phagophore assembly site (PAS) that is involved in autophagosome formation. Required for membrane expansion during autophagy and the CVT pathway. Required for sporulation. Has a role late in meiosis following DNA replication. This chain is Trafficking protein particle complex III-specific subunit 85 (TRS85), found in Saccharomyces cerevisiae (strain ATCC 204508 / S288c) (Baker's yeast).